A 656-amino-acid chain; its full sequence is Probable Xaa-Pro aminopeptidase P (656 aa).

Mn(2+) is bound by residues aspartate 453, aspartate 464, glutamate 562, and glutamate 576.

This sequence belongs to the peptidase M24B family. Requires Mn(2+) as cofactor.

It carries out the reaction Release of any N-terminal amino acid, including proline, that is linked to proline, even from a dipeptide or tripeptide.. Functionally, catalyzes the removal of a penultimate prolyl residue from the N-termini of peptides. The sequence is that of Probable Xaa-Pro aminopeptidase P (ampp) from Pyrenophora teres f. teres (strain 0-1) (Barley net blotch fungus).